Here is a 182-residue protein sequence, read N- to C-terminus: uncharacterized protein (182 aa).

The disordered stretch occupies residues 40 to 182 (LLKTDDDDDD…EEIQRNQKGN (143 aa)). Over residues 52-86 (NNININNNNATITTTSTTTTTTTTSTTKTFTISTD) the composition is skewed to low complexity. Over residues 87 to 100 (NYDEDVNDDQDEGD) the composition is skewed to acidic residues. 2 stretches are compositionally biased toward low complexity: residues 104–134 (NNNN…NNNN) and 148–157 (DLDFNNQNNN). Positions 165–182 (FLSKDDNIEEIQRNQKGN) are enriched in basic and acidic residues.

This is an uncharacterized protein from Dictyostelium discoideum (Social amoeba).